The chain runs to 808 residues: Sucrose synthase (808 aa).

Residues 271 to 753 (MLFRIALISP…GIERVYSTYT (483 aa)) form a GT-B glycosyltransferase region.

This sequence belongs to the glycosyltransferase 1 family. In terms of assembly, probably a homotetramer.

The catalysed reaction is an NDP-alpha-D-glucose + D-fructose = a ribonucleoside 5'-diphosphate + sucrose + H(+). It carries out the reaction ADP-alpha-D-glucose + D-fructose = sucrose + ADP + H(+). Its function is as follows. Catalyzes the reversible conversion of sucrose and a nucleotide disphosphate (NDP) into fructose and NDP-glucose; although the reaction is freely reversible in vitro, the physiological reaction seems to be sucrose cleavage. Unlike characterized plant enzymes prefers ADP as a cosubstrate, whereas plants prefer UDP. Its preference for ADP over UDP suggests it may directly link sucrose and glycogen metabolism. The polypeptide is Sucrose synthase (Thermosynechococcus vestitus (strain NIES-2133 / IAM M-273 / BP-1)).